Reading from the N-terminus, the 240-residue chain is Ribonuclease 3 (240 aa).

One can recognise an RNase III domain in the interval 9-141 (VEEFQKETGI…LLAAIYLDQG (133 aa)). Position 54 (Glu54) interacts with Mg(2+). Asp58 is a catalytic residue. 2 residues coordinate Mg(2+): Asp127 and Glu130. The active site involves Glu130. One can recognise a DRBM domain in the interval 168 to 237 (DYKTALQEIV…ARIAYEKLLK (70 aa)).

It belongs to the ribonuclease III family. As to quaternary structure, homodimer. It depends on Mg(2+) as a cofactor.

It is found in the cytoplasm. It carries out the reaction Endonucleolytic cleavage to 5'-phosphomonoester.. Functionally, digests double-stranded RNA. Involved in the processing of primary rRNA transcript to yield the immediate precursors to the large and small rRNAs (23S and 16S). Also processes some mRNAs, and tRNAs when they are encoded in the rRNA operon. Probably processes pre-crRNA and tracrRNA of type II CRISPR loci if present in the organism. This Thermotoga maritima (strain ATCC 43589 / DSM 3109 / JCM 10099 / NBRC 100826 / MSB8) protein is Ribonuclease 3 (rnc).